The chain runs to 229 residues: 2,3-bisphosphoglycerate-dependent phosphoglycerate mutase 2 (229 aa).

Substrate contacts are provided by residues 12–19 (RHGESVAN), 25–26 (TG), arginine 65, 92–95 (ERHY), lysine 103, and 119–120 (RR). Histidine 13 serves as the catalytic Tele-phosphohistidine intermediate. Glutamate 92 acts as the Proton donor/acceptor in catalysis.

This sequence belongs to the phosphoglycerate mutase family. BPG-dependent PGAM subfamily.

The catalysed reaction is (2R)-2-phosphoglycerate = (2R)-3-phosphoglycerate. It functions in the pathway carbohydrate degradation; glycolysis; pyruvate from D-glyceraldehyde 3-phosphate: step 3/5. Catalyzes the interconversion of 2-phosphoglycerate and 3-phosphoglycerate. In Lactobacillus johnsonii (strain CNCM I-12250 / La1 / NCC 533), this protein is 2,3-bisphosphoglycerate-dependent phosphoglycerate mutase 2.